A 365-amino-acid chain; its full sequence is tRNA(Met) cytidine acetate ligase (365 aa).

ATP contacts are provided by residues 7-20 (IAEF…HKYL), Gly96, Asn152, and Arg175.

This sequence belongs to the TmcAL family.

The protein resides in the cytoplasm. It catalyses the reaction cytidine(34) in elongator tRNA(Met) + acetate + ATP = N(4)-acetylcytidine(34) in elongator tRNA(Met) + AMP + diphosphate. Its function is as follows. Catalyzes the formation of N(4)-acetylcytidine (ac(4)C) at the wobble position of elongator tRNA(Met), using acetate and ATP as substrates. First activates an acetate ion to form acetyladenylate (Ac-AMP) and then transfers the acetyl group to tRNA to form ac(4)C34. The sequence is that of tRNA(Met) cytidine acetate ligase from Streptococcus pneumoniae (strain P1031).